Consider the following 305-residue polypeptide: tRNA pseudouridine synthase B (305 aa).

The Nucleophile role is filled by D48.

It belongs to the pseudouridine synthase TruB family. Type 1 subfamily.

It carries out the reaction uridine(55) in tRNA = pseudouridine(55) in tRNA. Responsible for synthesis of pseudouridine from uracil-55 in the psi GC loop of transfer RNAs. This Pseudomonas syringae pv. syringae (strain B728a) protein is tRNA pseudouridine synthase B.